A 70-amino-acid chain; its full sequence is Small ribosomal subunit protein bS21 (70 aa).

Belongs to the bacterial ribosomal protein bS21 family.

This chain is Small ribosomal subunit protein bS21, found in Paracidovorax citrulli (strain AAC00-1) (Acidovorax citrulli).